The primary structure comprises 298 residues: Acetyl-coenzyme A carboxylase carboxyl transferase subunit beta (298 aa).

Residues Met1–Pro21 form a disordered region. The CoA carboxyltransferase N-terminal domain occupies Pro41 to Pro298. Zn(2+) contacts are provided by Cys45, Cys48, Cys64, and Cys67. The C4-type zinc-finger motif lies at Cys45–Cys67.

It belongs to the AccD/PCCB family. Acetyl-CoA carboxylase is a heterohexamer composed of biotin carboxyl carrier protein (AccB), biotin carboxylase (AccC) and two subunits each of ACCase subunit alpha (AccA) and ACCase subunit beta (AccD). Zn(2+) serves as cofactor.

The protein localises to the cytoplasm. It carries out the reaction N(6)-carboxybiotinyl-L-lysyl-[protein] + acetyl-CoA = N(6)-biotinyl-L-lysyl-[protein] + malonyl-CoA. The protein operates within lipid metabolism; malonyl-CoA biosynthesis; malonyl-CoA from acetyl-CoA: step 1/1. In terms of biological role, component of the acetyl coenzyme A carboxylase (ACC) complex. Biotin carboxylase (BC) catalyzes the carboxylation of biotin on its carrier protein (BCCP) and then the CO(2) group is transferred by the transcarboxylase to acetyl-CoA to form malonyl-CoA. This chain is Acetyl-coenzyme A carboxylase carboxyl transferase subunit beta, found in Acinetobacter baumannii (strain AYE).